A 230-amino-acid polypeptide reads, in one-letter code: Probable septum site-determining protein MinC (230 aa).

It belongs to the MinC family. In terms of assembly, interacts with MinD and FtsZ.

Its function is as follows. Cell division inhibitor that blocks the formation of polar Z ring septums. Rapidly oscillates between the poles of the cell to destabilize FtsZ filaments that have formed before they mature into polar Z rings. Prevents FtsZ polymerization. The polypeptide is Probable septum site-determining protein MinC (Erwinia tasmaniensis (strain DSM 17950 / CFBP 7177 / CIP 109463 / NCPPB 4357 / Et1/99)).